The following is a 336-amino-acid chain: Protein-glutamate methylesterase/protein-glutamine glutaminase 3 (336 aa).

Residues 2–119 enclose the Response regulatory domain; that stretch reads KIAIVNDMPM…PNPREAAAPL (118 aa). Aspartate 53 is modified (4-aspartylphosphate). The CheB-type methylesterase domain occupies 147–336; that stretch reads VSRRDRLVAI…APRLMEVFTQ (190 aa). Catalysis depends on residues serine 159, histidine 186, and aspartate 279.

This sequence belongs to the CheB family. Phosphorylated by CheA. Phosphorylation of the N-terminal regulatory domain activates the methylesterase activity.

The protein localises to the cytoplasm. It catalyses the reaction [protein]-L-glutamate 5-O-methyl ester + H2O = L-glutamyl-[protein] + methanol + H(+). The enzyme catalyses L-glutaminyl-[protein] + H2O = L-glutamyl-[protein] + NH4(+). Involved in chemotaxis. Part of a chemotaxis signal transduction system that modulates chemotaxis in response to various stimuli. Catalyzes the demethylation of specific methylglutamate residues introduced into the chemoreceptors (methyl-accepting chemotaxis proteins or MCP) by CheR. Also mediates the irreversible deamidation of specific glutamine residues to glutamic acid. This chain is Protein-glutamate methylesterase/protein-glutamine glutaminase 3, found in Pseudomonas syringae pv. tomato (strain ATCC BAA-871 / DC3000).